The chain runs to 211 residues: Small ribosomal subunit protein eS1 (211 aa).

The protein belongs to the eukaryotic ribosomal protein eS1 family.

This chain is Small ribosomal subunit protein eS1, found in Methanothrix thermoacetophila (strain DSM 6194 / JCM 14653 / NBRC 101360 / PT) (Methanosaeta thermophila).